A 377-amino-acid chain; its full sequence is Anhydro-N-acetylmuramic acid kinase (377 aa).

ATP is bound at residue 18–25 (GTSADGID).

It belongs to the anhydro-N-acetylmuramic acid kinase family.

The enzyme catalyses 1,6-anhydro-N-acetyl-beta-muramate + ATP + H2O = N-acetyl-D-muramate 6-phosphate + ADP + H(+). Its pathway is amino-sugar metabolism; 1,6-anhydro-N-acetylmuramate degradation. It participates in cell wall biogenesis; peptidoglycan recycling. Functionally, catalyzes the specific phosphorylation of 1,6-anhydro-N-acetylmuramic acid (anhMurNAc) with the simultaneous cleavage of the 1,6-anhydro ring, generating MurNAc-6-P. Is required for the utilization of anhMurNAc either imported from the medium or derived from its own cell wall murein, and thus plays a role in cell wall recycling. In Xanthomonas campestris pv. campestris (strain 8004), this protein is Anhydro-N-acetylmuramic acid kinase.